The primary structure comprises 101 residues: Small ribosomal subunit protein uS14 (101 aa).

Belongs to the universal ribosomal protein uS14 family. Part of the 30S ribosomal subunit. Contacts proteins S3 and S10.

Functionally, binds 16S rRNA, required for the assembly of 30S particles and may also be responsible for determining the conformation of the 16S rRNA at the A site. The polypeptide is Small ribosomal subunit protein uS14 (Burkholderia ambifaria (strain MC40-6)).